A 168-amino-acid chain; its full sequence is G/U mismatch-specific DNA glycosylase (168 aa).

This sequence belongs to the uracil-DNA glycosylase (UDG) superfamily. TDG/mug family. As to quaternary structure, binds DNA as a monomer.

The protein resides in the cytoplasm. The enzyme catalyses Specifically hydrolyzes mismatched double-stranded DNA and polynucleotides, releasing free uracil.. Its function is as follows. Excises ethenocytosine and uracil, which can arise by alkylation or deamination of cytosine, respectively, from the corresponding mispairs with guanine in ds-DNA. It is capable of hydrolyzing the carbon-nitrogen bond between the sugar-phosphate backbone of the DNA and the mispaired base. The complementary strand guanine functions in substrate recognition. Required for DNA damage lesion repair in stationary-phase cells. This chain is G/U mismatch-specific DNA glycosylase, found in Cronobacter sakazakii (strain ATCC BAA-894) (Enterobacter sakazakii).